The sequence spans 158 residues: Histone H3-like centromeric protein CSE4 (158 aa).

Residues 1–18 (MARISTSSNRPVPTSSAL) are compositionally biased toward polar residues. Residues 1-59 (MARISTSSNRPVPTSSALRRQRERDDGGRSTRAPGHNTGLYGNQPGDPPTIRSTNTTVK) form a disordered region. Basic and acidic residues predominate over residues 20–29 (RQRERDDGGR). The H3-like stretch occupies residues 54-157 (TNTTVKRRYR…IQLARRIRGN (104 aa)).

The protein belongs to the histone H3 family. Component of centromeric nucleosomes, where DNA is wrapped around a histone octamer core. The octamer contains two molecules each of H2A, H2B, CSE4/CENPA and H4 assembled in one CSE4-H4 heterotetramer and two H2A-H2B heterodimers. Interacts with the inner kinetochore. Ubiquitinated. Is degraded through ubiquitin-mediated proteolysis when not protected by its association to the kinetochore.

The protein resides in the nucleus. It is found in the chromosome. It localises to the centromere. In terms of biological role, histone H3-like nucleosomal protein that is specifically found in centromeric nucleosomes. Replaces conventional H3 in the nucleosome core of centromeric chromatin that serves as an assembly site for the inner kinetochore. Required for recruitment and assembly of kinetochore proteins, mitotic progression and chromosome segregation. May serve as an epigenetic mark that propagates centromere identity through replication and cell division. This chain is Histone H3-like centromeric protein CSE4 (CSE4), found in Millerozyma farinosa (Yeast).